Consider the following 420-residue polypeptide: Glycogen synthase kinase-3 beta (420 aa).

Residues 1-22 (MSGRPRTTSFAESCKPVQQPSA) show a composition bias toward polar residues. The tract at residues 1 to 53 (MSGRPRTTSFAESCKPVQQPSAFGSMKVSRDKDGSKVTTVVATPGQGPDRPQE) is disordered. Serine 9 is subject to Phosphoserine; by PKB/AKT1, RPS6KA3 and SGK3. Cysteine 14 carries the S-palmitoyl cysteine lipid modification. One can recognise a Protein kinase domain in the interval 56-340 (YTDTKVIGNG…PLEACAHSFF (285 aa)). ATP-binding positions include 62-70 (IGNGSFGVV) and lysine 85. Catalysis depends on aspartate 181, which acts as the Proton acceptor. Tyrosine 216 carries the post-translational modification Phosphotyrosine. Positions 386–401 (AAASTPTNATAASDAN) are enriched in low complexity. The disordered stretch occupies residues 386–420 (AAASTPTNATAASDANTGDRGQTNNAASASASNST). The residue at position 389 (serine 389) is a Phosphoserine. Phosphothreonine is present on residues threonine 390 and threonine 402. Residues 409 to 420 (NNAASASASNST) are compositionally biased toward low complexity.

Belongs to the protein kinase superfamily. CMGC Ser/Thr protein kinase family. GSK-3 subfamily. Monomer. Interacts with ARRB2, DISC1 and ZBED3. Interacts with CABYR, MMP2, MUC1, NIN and PRUNE1. Interacts with AXIN1; the interaction mediates hyperphosphorylation of CTNNB1 leading to its ubiquitination and destruction. Interacts with and phosphorylates SNAI1. Interacts with DNM1L (via a C-terminal domain). Found in a complex composed of MACF1, APC, AXIN1, CTNNB1 and GSK3B. Interacts with SGK3. Interacts with DAB2IP (via C2 domain); the interaction stimulates GSK3B kinase activation. Interacts (via C2 domain) with PPP2CA. Interacts with the CLOCK-BMAL1 heterodimer. Interacts with the BMAL1. Interacts with CTNND2. Interacts with NCYM. The complex composed, at least, of APC, CTNNB1 and GSK3B interacts with JPT1; the interaction requires the inactive form of GSK3B (phosphorylated at 'Ser-9'). Forms a complex composed of PRKAR2A or PRKAR2B, GSK3B and GSKIP through GSKIP interaction; facilitates PKA-induced phosphorylation and regulates GSK3B activity. Interacts with GSKIP. Interacts with GID8. Interacts with PIWIL2. Interacts with LMBR1L. Interacts with DDX3X. Interacts with BIRC2. Interacts with TNFRSF10B; TNFRSF10B stimulation inhibits GSK3B kinase activity. Interacts with RICTOR; the interaction results in phosphorylation of RICTOR at 'Thr-1695' by GSK3B which facilitates FBXW7-mediated ubiquitination and subsequent degradation of RICTOR. Found in a complex with SLC39A6, SLC39A10 and with GSK3B that controls NCAM1 phosphorylation. Interacts with PKP3 (via ARM repeats); the interaction may be involved in PKP3 protein degradation. Post-translationally, phosphorylated by AKT1 and ILK1. Upon insulin-mediated signaling, the activated PKB/AKT1 protein kinase phosphorylates and deactivates GSK3B, resulting in the dephosphorylation and activation of GYS1. Activated by phosphorylation at Tyr-216. Inactivated by phosphorylation at Ser-9. Phosphorylated in a circadian manner in the hippocampus. Mono-ADP-ribosylation by PARP10 negatively regulates kinase activity. In terms of processing, palmitoylated. Palmitoylation by ZDHHC4 prevents AKT1-mediated phosphorylation. As to expression, expressed in testis, thymus, prostate and ovary and weakly expressed in lung, brain and kidney. Colocalizes with EIF2AK2/PKR and TAU in the Alzheimer disease (AD) brain.

It localises to the cytoplasm. It is found in the nucleus. Its subcellular location is the cell membrane. It catalyses the reaction L-seryl-[tau protein] + ATP = O-phospho-L-seryl-[tau protein] + ADP + H(+). It carries out the reaction L-threonyl-[tau protein] + ATP = O-phospho-L-threonyl-[tau protein] + ADP + H(+). The enzyme catalyses L-seryl-[protein] + ATP = O-phospho-L-seryl-[protein] + ADP + H(+). The catalysed reaction is L-threonyl-[protein] + ATP = O-phospho-L-threonyl-[protein] + ADP + H(+). With respect to regulation, activated by phosphorylation at Tyr-216. In response to insulin, inhibited by phosphorylation at Ser-9 by PKB/AKT1 and RPS6KA3; phosphorylation at this site causes a conformational change, preventing access of substrates to the active site. Inhibited by IL22 treatment which also triggers phosphorylation at Ser-9, promoting inactivation. Inhibited by lithium. Functionally, constitutively active protein kinase that acts as a negative regulator in the hormonal control of glucose homeostasis, Wnt signaling and regulation of transcription factors and microtubules, by phosphorylating and inactivating glycogen synthase (GYS1 or GYS2), EIF2B, CTNNB1/beta-catenin, APC, AXIN1, DPYSL2/CRMP2, JUN, NFATC1/NFATC, MAPT/TAU and MACF1. Requires primed phosphorylation of the majority of its substrates. In skeletal muscle, contributes to insulin regulation of glycogen synthesis by phosphorylating and inhibiting GYS1 activity and hence glycogen synthesis. May also mediate the development of insulin resistance by regulating activation of transcription factors. Regulates protein synthesis by controlling the activity of initiation factor 2B (EIF2BE/EIF2B5) in the same manner as glycogen synthase. In Wnt signaling, GSK3B forms a multimeric complex with APC, AXIN1 and CTNNB1/beta-catenin and phosphorylates the N-terminus of CTNNB1 leading to its degradation mediated by ubiquitin/proteasomes. Phosphorylates JUN at sites proximal to its DNA-binding domain, thereby reducing its affinity for DNA. Phosphorylates NFATC1/NFATC on conserved serine residues promoting NFATC1/NFATC nuclear export, shutting off NFATC1/NFATC gene regulation, and thereby opposing the action of calcineurin. Phosphorylates MAPT/TAU on 'Thr-548', decreasing significantly MAPT/TAU ability to bind and stabilize microtubules. MAPT/TAU is the principal component of neurofibrillary tangles in Alzheimer disease. Plays an important role in ERBB2-dependent stabilization of microtubules at the cell cortex. Phosphorylates MACF1, inhibiting its binding to microtubules which is critical for its role in bulge stem cell migration and skin wound repair. Probably regulates NF-kappa-B (NFKB1) at the transcriptional level and is required for the NF-kappa-B-mediated anti-apoptotic response to TNF-alpha (TNF/TNFA). Negatively regulates replication in pancreatic beta-cells, resulting in apoptosis, loss of beta-cells and diabetes. Through phosphorylation of the anti-apoptotic protein MCL1, may control cell apoptosis in response to growth factors deprivation. Phosphorylates MUC1 in breast cancer cells, decreasing the interaction of MUC1 with CTNNB1/beta-catenin. Is necessary for the establishment of neuronal polarity and axon outgrowth. Phosphorylates MARK2, leading to inhibition of its activity. Phosphorylates SIK1 at 'Thr-182', leading to sustainment of its activity. Phosphorylates ZC3HAV1 which enhances its antiviral activity. Phosphorylates SNAI1, leading to its ubiquitination and proteasomal degradation. Phosphorylates SFPQ at 'Thr-687' upon T-cell activation. Phosphorylates NR1D1 st 'Ser-55' and 'Ser-59' and stabilizes it by protecting it from proteasomal degradation. Regulates the circadian clock via phosphorylation of the major clock components including BMAL1, CLOCK and PER2. Phosphorylates FBXL2 at 'Thr-404' and primes it for ubiquitination by the SCF(FBXO3) complex and proteasomal degradation. Phosphorylates CLOCK AT 'Ser-427' and targets it for proteasomal degradation. Phosphorylates BMAL1 at 'Ser-17' and 'Ser-21' and primes it for ubiquitination and proteasomal degradation. Phosphorylates OGT at 'Ser-3' or 'Ser-4' which positively regulates its activity. Phosphorylates MYCN in neuroblastoma cells which may promote its degradation. Regulates the circadian rhythmicity of hippocampal long-term potentiation and BMAL1 and PER2 expression. Acts as a regulator of autophagy by mediating phosphorylation of KAT5/TIP60 under starvation conditions, activating KAT5/TIP60 acetyltransferase activity and promoting acetylation of key autophagy regulators, such as ULK1 and RUBCNL/Pacer. Negatively regulates extrinsic apoptotic signaling pathway via death domain receptors. Promotes the formation of an anti-apoptotic complex, made of DDX3X, BRIC2 and GSK3B, at death receptors, including TNFRSF10B. The anti-apoptotic function is most effective with weak apoptotic signals and can be overcome by stronger stimulation. Phosphorylates E2F1, promoting the interaction between E2F1 and USP11, stabilizing E2F1 and promoting its activity. Phosphorylates mTORC2 complex component RICTOR at 'Ser-1235' in response to endoplasmic stress, inhibiting mTORC2. Phosphorylates mTORC2 complex component RICTOR at 'Thr-1695' which facilitates FBXW7-mediated ubiquitination and subsequent degradation of RICTOR. Phosphorylates FXR1, promoting FXR1 ubiquitination by the SCF(FBXO4) complex and FXR1 degradation by the proteasome. Phosphorylates interleukin-22 receptor subunit IL22RA1, preventing its proteasomal degradation. The chain is Glycogen synthase kinase-3 beta from Homo sapiens (Human).